The chain runs to 197 residues: Heart- and neural crest derivatives-expressed protein 1 (197 aa).

Disordered regions lie at residues 61-94 (VVGPSQTSGRIENLGGKLGRRKGAPPKKERRRTE) and 155-184 (VDGKRRREPQPTEGYWGAAPAGEKKLKGRT). Residues 78–90 (LGRRKGAPPKKER) show a composition bias toward basic residues. Residues 80 to 132 (RRKGAPPKKERRRTESINSAFAELRECIPNVPADTKLSKIKTLRLATSYIGYL) enclose the bHLH domain.

As to quaternary structure, efficient DNA binding requires dimerization with another bHLH protein. In terms of tissue distribution, highly expressed in the adult heart and expressed at lower levels in the intestine and gall bladder.

Its subcellular location is the nucleus. It localises to the nucleolus. Its function is as follows. Plays an essential role in cardiac morphogenesis. This chain is Heart- and neural crest derivatives-expressed protein 1 (hand1), found in Xenopus laevis (African clawed frog).